Consider the following 196-residue polypeptide: Cell division protein SepF (196 aa).

Residues 15–80 (VEDDEEFNEP…PKRSASTFSK (66 aa)) form a disordered region. Low complexity predominate over residues 57–72 (PAQTTPKPQTQTAAPK).

Belongs to the SepF family. As to quaternary structure, homodimer. Interacts with FtsZ.

It is found in the cytoplasm. In terms of biological role, cell division protein that is part of the divisome complex and is recruited early to the Z-ring. Probably stimulates Z-ring formation, perhaps through the cross-linking of FtsZ protofilaments. Its function overlaps with FtsA. The protein is Cell division protein SepF of Lactococcus lactis subsp. cremoris (strain MG1363).